Here is an 804-residue protein sequence, read N- to C-terminus: MFVSYKWLEDYVDLKGMDPAVLAEKITRAGIEVEGIEYKGEGIKGVVIGHVLEREQHPNADKLNKCLVDIGAEAPVQIICGAPNVDKGQKVAVATVGAVLPGNFKIKKAKLRGEESNGMICSLQELGIESKLVAKEYAEGIFVFPNDAETGSDALAALQLDDAILELGLTPNRADAMNMLGVAYEVAAILDTEVKLPQTDYPAASEQASDYISVKIEDQEANPLYTAKIIKNVTIAPSPLWMQTKLMNAGIRPHNNVVDITNFVLLEYGQPLHAFDYDRFGSKEVVVRKAAENEMIVTLDDQERKLSADHLVITNGTKAQAVAGVMGGAESEVQEDTKTILLEAAYFNGQKVRKASKDLGLRSESSVRFEKGIDPARVRLAAERAAQLIHLYAGGEVLAGTVEEDHLTIEANNIHVSADKVSSVLGLTISKEELISIYKRLGFTVGEADDLLVVTVPSRRGDITIEEDLIEEAARLYGYDNIPSTLPETAGTTGGLTPYQAKRRKVRRFLEGAGLSQAITYSLTNEKKATAFAIEKSLNTVLALPMSEERSILRHSLVPNLLDSVSYNLARQTDSVALYEVGSVFLTKEEDTKPVETERVAGAVTGLWRKQLWQGEKKPVDFFVVKGIVEGLLDKLNVLDSIEFVQSERKQLHPGRTANILLNGSLIGFIGQVHPSLEKELDIKETYVFELDLHALLAAETAPLVYTAIPKYPSVTRDIALVTDKTVTSGQLESVIKEAGGKLLKEVTVFDVYEGEHMEEGKKSVAFSLQYVNPEQTLTEEEVTKAHSKVLKALEDTYQAVLRG.

In terms of domain architecture, tRNA-binding spans 40–155 (GEGIKGVVIG…NDAETGSDAL (116 aa)). A B5 domain is found at 409–484 (IEANNIHVSA…RLYGYDNIPS (76 aa)). Mg(2+)-binding residues include Asp462, Asp468, Glu471, and Glu472. Residues 710-803 (PKYPSVTRDI…LEDTYQAVLR (94 aa)) enclose the FDX-ACB domain.

This sequence belongs to the phenylalanyl-tRNA synthetase beta subunit family. Type 1 subfamily. Tetramer of two alpha and two beta subunits. The cofactor is Mg(2+).

It is found in the cytoplasm. It catalyses the reaction tRNA(Phe) + L-phenylalanine + ATP = L-phenylalanyl-tRNA(Phe) + AMP + diphosphate + H(+). In Bacillus subtilis (strain 168), this protein is Phenylalanine--tRNA ligase beta subunit (pheT).